Here is a 282-residue protein sequence, read N- to C-terminus: PTS system sorbose-specific EIID component (282 aa).

The PTS EIID domain maps to 13 to 281 (TKITKGDMFK…GIVGYWLGIL (269 aa)). A run of 4 helical transmembrane segments spans residues 135–155 (LGAS…FVAF), 197–217 (GLFI…PLVV), 234–254 (ILDQ…CMYL), and 261–281 (PILL…LGIL).

The protein resides in the cell membrane. The phosphoenolpyruvate-dependent sugar phosphotransferase system (PTS), a major carbohydrate active transport system, catalyzes the phosphorylation of incoming sugar substrates concomitant with their translocation across the cell membrane. The enzyme II SorABCD PTS system is involved in L-sorbose transport. This Lacticaseibacillus casei (Lactobacillus casei) protein is PTS system sorbose-specific EIID component.